A 190-amino-acid polypeptide reads, in one-letter code: Dynactin subunit 6 (190 aa).

T186 is modified (phosphothreonine).

The protein belongs to the dynactin subunits 5/6 family. Dynactin subunit 6 subfamily. Subunit of dynactin, a multiprotein complex part of a tripartite complex with dynein and a adapter, such as BICDL1, BICD2 or HOOK3. The dynactin complex is built around ACTR1A/ACTB filament and consists of an actin-related filament composed of a shoulder domain, a pointed end and a barbed end. Its length is defined by its flexible shoulder domain. The soulder is composed of 2 DCTN1 subunits, 4 DCTN2 and 2 DCTN3. The 4 DCNT2 (via N-terminus) bind the ACTR1A filament and act as molecular rulers to determine the length. The pointed end is important for binding dynein-dynactin cargo adapters. Consists of 4 subunits: ACTR10, DCNT4, DCTN5 and DCTN6. Within the complex DCTN6 forms a heterodimer with DCTN5. The barbed end is composed of a CAPZA1:CAPZB heterodimers, which binds ACTR1A/ACTB filament and dynactin and stabilizes dynactin. Interacts with PLK1. Interacts with N4BP2L1. Phosphorylation at Thr-186 by CDK1 during mitotic prometaphase creates a binding site for PLK1 that facilitates its recruitment to kinetochores.

The protein localises to the cytoplasm. It is found in the cytoskeleton. Its subcellular location is the chromosome. It localises to the centromere. The protein resides in the kinetochore. Functionally, part of the dynactin complex that activates the molecular motor dynein for ultra-processive transport along microtubules. This is Dynactin subunit 6 (DCTN6) from Sus scrofa (Pig).